A 412-amino-acid polypeptide reads, in one-letter code: MSTKLCQRIARTATLSPTSLVPRSSRLIPIVSSAAVRPSSAIPTRRPFSTTESRYLANVQAGMDKIRDAIAENFGGPAHNIGTTSFSLDDTPDLSGKVAVITGGSEGIGYGVAYTLIKHNLSKLFILSRKREVFDGALASIASELGQDKADRVHWIQCNLEDWAQTAVVAEQIKKDTDRLDILVNNSGRGIMTAGLTSYGVDKHMATNHMGHVVLTSHLLPLLQKTAEETGETVRISNQSSNLHSAAPKGTQFKSLEEINEDVGPNGQYGRSKLAGILYARYFDREVTRKMEGSKGRVVMNATHPGFVSTKQSVKDIHEPYPISGFAISHLAEPFKKDQFEGAVPTVYAVTMANEGGQWICAPAKAEAGTDLAQSDELADNLMELTRKIISEKTWPKSVAKGCPMDDVVVHV.

A mitochondrion-targeting transit peptide spans Met1 to Tyr55. Residues Ile108, Asn120, Asn186, Tyr269, Lys273, Val308, Thr310, and Gln312 each contribute to the NADP(+) site. Tyr269 serves as the catalytic Proton donor. Catalysis depends on Lys273, which acts as the Lowers pKa of active site Tyr.

The protein belongs to the short-chain dehydrogenases/reductases (SDR) family.

It localises to the mitochondrion. May play a role as an NAD-dependent dehydrogenase in the mitochondria. The sequence is that of Putative oxidoreductase bli-4, mitochondrial (bli-4) from Neurospora crassa (strain ATCC 24698 / 74-OR23-1A / CBS 708.71 / DSM 1257 / FGSC 987).